The primary structure comprises 253 residues: 5'/3'-nucleotidase SurE (253 aa).

4 residues coordinate a divalent metal cation: Asp8, Asp9, Ser39, and Asn92.

Belongs to the SurE nucleotidase family. The cofactor is a divalent metal cation.

The protein resides in the cytoplasm. The enzyme catalyses a ribonucleoside 5'-phosphate + H2O = a ribonucleoside + phosphate. It carries out the reaction a ribonucleoside 3'-phosphate + H2O = a ribonucleoside + phosphate. The catalysed reaction is [phosphate](n) + H2O = [phosphate](n-1) + phosphate + H(+). Its function is as follows. Nucleotidase with a broad substrate specificity as it can dephosphorylate various ribo- and deoxyribonucleoside 5'-monophosphates and ribonucleoside 3'-monophosphates with highest affinity to 3'-AMP. Also hydrolyzes polyphosphate (exopolyphosphatase activity) with the preference for short-chain-length substrates (P20-25). Might be involved in the regulation of dNTP and NTP pools, and in the turnover of 3'-mononucleotides produced by numerous intracellular RNases (T1, T2, and F) during the degradation of various RNAs. This chain is 5'/3'-nucleotidase SurE, found in Shigella boydii serotype 18 (strain CDC 3083-94 / BS512).